Here is a 38-residue protein sequence, read N- to C-terminus: Large ribosomal subunit protein bL36c (38 aa).

It belongs to the bacterial ribosomal protein bL36 family.

It localises to the plastid. It is found in the chloroplast. This Mesostigma viride (Green alga) protein is Large ribosomal subunit protein bL36c (rpl36).